The primary structure comprises 153 residues: Superoxide dismutase [Cu-Zn] (153 aa).

The Cu cation site is built by H46, H48, and H63. An intrachain disulfide couples C57 to C146. The disordered stretch occupies residues G61 to H80. Residues H63, H71, H80, and D83 each contribute to the Zn(2+) site. Basic and acidic residues predominate over residues G68–H80. H120 contacts Cu cation. Positions D124–K136 are enriched in basic and acidic residues. Residues D124–R143 form a disordered region. R143 contacts substrate.

This sequence belongs to the Cu-Zn superoxide dismutase family. In terms of assembly, homodimer. Cu cation serves as cofactor. It depends on Zn(2+) as a cofactor.

The protein localises to the cytoplasm. It catalyses the reaction 2 superoxide + 2 H(+) = H2O2 + O2. In terms of biological role, destroys radicals which are normally produced within the cells and which are toxic to biological systems. This is Superoxide dismutase [Cu-Zn] (sodC) from Aspergillus flavus.